Reading from the N-terminus, the 224-residue chain is MQFHFKVADAERDRDNVAATSNAAANPHAALQPQQPVALVEPKDAQHEIRLQNIVATFSVNCELDLKAINSRTRNSEYSPKRFRGVIMRMHSPRCTALIFRTGKVICTGARNEIEADIGSRKFARILQKLGFPVKFMEYKLQNIVATVDLRFPIRLENLNHVHGQFSSYEPEMFPGLIYRMVKPRIVLLIFVNGKVVFTGAKSRKDIMDCLEAISPILLSFRKT.

The interval 14 to 34 is disordered; sequence RDNVAATSNAAANPHAALQPQ. The segment covering 17–34 has biased composition (low complexity); it reads VAATSNAAANPHAALQPQ. Tandem repeats lie at residues 51–127 and 141–218.

The protein belongs to the TBP family. As to expression, primary spermatocytes in the adult testis and in a subset of cells in the dorsal medial region of the embryonic CNS.

The protein resides in the nucleus. Acts as a transcription factor. Binds to the TATA box promoter element which lies close to the position of transcription initiation. In terms of biological role, may be essential for embryonic development. The protein is TBP-related factor (Trf) of Drosophila melanogaster (Fruit fly).